Reading from the N-terminus, the 127-residue chain is Large ribosomal subunit protein bL12 (127 aa).

Belongs to the bacterial ribosomal protein bL12 family. In terms of assembly, homodimer. Part of the ribosomal stalk of the 50S ribosomal subunit. Forms a multimeric L10(L12)X complex, where L10 forms an elongated spine to which 2 to 4 L12 dimers bind in a sequential fashion. Binds GTP-bound translation factors.

Its function is as follows. Forms part of the ribosomal stalk which helps the ribosome interact with GTP-bound translation factors. Is thus essential for accurate translation. In Phytoplasma mali (strain AT), this protein is Large ribosomal subunit protein bL12.